A 551-amino-acid polypeptide reads, in one-letter code: MNTISPVVIEPRHGGEHHSVNVKYGIIIFAISVIHILFFLLVKFIEINRWKSNGRFNKSLWKLNNTPTWMLITLWILIIFFIGGANITEFSEEYITIAKRYGRIAYCLLPLNIYLILRPTNCVYLKPGYYLENLSLHKWLSRLISICTLIHAIGYFYKWNKEGKILIKSFRFLNFLGIVVFVMFAVLIIVSIRILRRKYYSLFYIIHNITAWSMVVLIIFHARPGVTIFGIICLILMCYQLLYLRFYKSYPVNNLKIVDIPMSTLQIIKIPKPSNFPTWLPGSHVRLNYTTSNIKSWINSSHPFTIANIPEDGVNYLSLVIKKPGNFIIDQYLTYLLTGPYISIDYPFYNSANLINIICGGSGISFGLPILNHYKSLNSNIPIKLIWCVRNRNDCFIMNQLDMTNVEVFITSAGDSSSDEQSPSSSSYQPVPLFVVDDEQDESHAKVEQTQGEEEVDGLLNQDENGIPLQSMKKESFPKKEEGEDEEKSSKDVFKYGRPKFDEVFAIDDPTLNPNYNDSWVIACGPDQLIEDAKYWSQEKGYRFFSEKYEM.

Helical transmembrane passes span 25–45, 67–87, 100–117, 138–155, 172–192, 199–221, and 225–247; these read GIII…VKFI, PTWM…GANI, RYGR…YLIL, KWLS…AIGY, FLNF…IVSI, YYSL…IIFH, and GVTI…LRFY. Residues 102–217 enclose the Ferric oxidoreductase domain; it reads GRIAYCLLPL…NITAWSMVVL (116 aa). The FAD-binding FR-type domain occupies 247–369; it reads YKSYPVNNLK…GGSGISFGLP (123 aa). The segment at 440–492 is disordered; it reads QDESHAKVEQTQGEEEVDGLLNQDENGIPLQSMKKESFPKKEEGEDEEKSSKD. Positions 472-492 are enriched in basic and acidic residues; it reads MKKESFPKKEEGEDEEKSSKD.

This sequence belongs to the ferric reductase (FRE) family. AIM14 subfamily.

The protein resides in the membrane. Probable cell surface metalloreductase. May be involved in iron or copper homeostasis. The protein is Probable metalloreductase AIM14 (AIM14) of Candida tropicalis (strain ATCC MYA-3404 / T1) (Yeast).